Consider the following 313-residue polypeptide: UbiA prenyltransferase claS (313 aa).

2 consecutive transmembrane segments (helical) span residues 30 to 52 and 57 to 79; these read FAGT…RALL and TFGT…GCIW. The NDxxDxxxD motif lies at 81 to 88; the sequence is DILDQDFD. The Mg(2+) site is built by Asp-84 and Asp-88. Helical transmembrane passes span 99 to 121, 131 to 148, and 155 to 177; these read IASG…FILM, AWMI…IYPL, and WPQA…YTTG. Residues Asp-205 and Asp-209 each coordinate Mg(2+). The DxxxD motif lies at 205 to 209; the sequence is DKKDD. Residues 205 to 209 carry the YxxxK motif; that stretch reads DKKDD. Transmembrane regions (helical) follow at residues 227–247, 250–270, and 293–313; these read PVLS…GILN, ELPY…TQLW, and AIVW…GAIM.

This sequence belongs to the UbiA prenyltransferase family. Mg(2+) serves as cofactor.

The protein localises to the membrane. It catalyses the reaction hydroquinone + (2E)-geranyl diphosphate = (2E)-geranylhydroquinone + diphosphate. It participates in secondary metabolite biosynthesis; terpenoid biosynthesis. Functionally, prenyltransferase; part of the gene cluster that mediates the biosynthesis of clavilactone A, a meroterpenoid that features a unique benzo-fused ten-membered carbocyclic ring unit with an alpha,beta-epoxy-gamma-lactone moiety, forming an intriguing 10/5/3 tricyclic nested skeleton. ClaR, ClaS and ClaT are sufficient to produce clavilactone A. Within the pathway, claS acts as an atypical UbiA prenyltransferase that transfers geranyl pyrophosphate (GPP) to hydroquinone (HYQ) instead of p-hydroxybenzoic acid (PHB), producing the first intermediate geranylhydroquinone. The cytochrome P450 monooxygenase claR then catalyzes the diradical coupling reaction between the intramolecular hydroquinone and allyl moieties to form the benzo-fused ten-membered carbocyclic ring unit of wigantol. Finally the cytochrome P450 monooxygenase claT exquisitely and stereoselectively assembles the alpha,beta-epoxy-gamma-lactone moiety, producing clavilactone A via arnebinol A. In Ampulloclitocybe clavipes (Club foot), this protein is UbiA prenyltransferase claS.